A 167-amino-acid polypeptide reads, in one-letter code: RNA pyrophosphohydrolase (167 aa).

The Nudix hydrolase domain occupies 8-158; sequence PYRRNVGAML…KRDIYRTLVR (151 aa). Residues 49–70 carry the Nudix box motif; the sequence is GGIDADEDPEEAVLRELREEIG.

It belongs to the Nudix hydrolase family. RppH subfamily. It depends on a divalent metal cation as a cofactor.

Accelerates the degradation of transcripts by removing pyrophosphate from the 5'-end of triphosphorylated RNA, leading to a more labile monophosphorylated state that can stimulate subsequent ribonuclease cleavage. In Gluconacetobacter diazotrophicus (strain ATCC 49037 / DSM 5601 / CCUG 37298 / CIP 103539 / LMG 7603 / PAl5), this protein is RNA pyrophosphohydrolase.